The primary structure comprises 469 residues: uncharacterized protein (469 aa).

2 disordered regions span residues 248–314 (RDDN…EPES) and 327–418 (QMDQ…PRPT). Composition is skewed to polar residues over residues 292-305 (ESSNTRDQQTNAAS) and 350-365 (TARQPQVTPTRVPNTV). Positions 366–377 (TATSASTPASTS) are enriched in low complexity.

This is an uncharacterized protein from Cryphonectria parasitica (Chestnut blight fungus).